The sequence spans 177 residues: ATP synthase subunit delta (177 aa).

Belongs to the ATPase delta chain family. As to quaternary structure, F-type ATPases have 2 components, F(1) - the catalytic core - and F(0) - the membrane proton channel. F(1) has five subunits: alpha(3), beta(3), gamma(1), delta(1), epsilon(1). F(0) has three main subunits: a(1), b(2) and c(10-14). The alpha and beta chains form an alternating ring which encloses part of the gamma chain. F(1) is attached to F(0) by a central stalk formed by the gamma and epsilon chains, while a peripheral stalk is formed by the delta and b chains.

It localises to the cell inner membrane. Its function is as follows. F(1)F(0) ATP synthase produces ATP from ADP in the presence of a proton or sodium gradient. F-type ATPases consist of two structural domains, F(1) containing the extramembraneous catalytic core and F(0) containing the membrane proton channel, linked together by a central stalk and a peripheral stalk. During catalysis, ATP synthesis in the catalytic domain of F(1) is coupled via a rotary mechanism of the central stalk subunits to proton translocation. This protein is part of the stalk that links CF(0) to CF(1). It either transmits conformational changes from CF(0) to CF(1) or is implicated in proton conduction. This chain is ATP synthase subunit delta, found in Yersinia enterocolitica serotype O:8 / biotype 1B (strain NCTC 13174 / 8081).